The primary structure comprises 1511 residues: Bifunctional glutamate/proline--tRNA ligase (1511 aa).

A glutamate--tRNA ligase region spans residues 164 to 758; sequence GTKWDVSENK…SSVLYNRVAA (595 aa). The 'HIGH' region signature appears at 204 to 214; sequence PEASGYLHIGH. Residues 296-315 are disordered; that stretch reads AEQMKAEREQRAESKHRQNS. Residues 299–315 are compositionally biased toward basic and acidic residues; that stretch reads MKAEREQRAESKHRQNS. At K300 the chain carries N6-acetyllysine; alternate. An N6-malonyllysine; alternate modification is found at K300. T355 is modified (phosphothreonine). K417 carries the N6-acetyllysine modification. Positions 432–436 match the 'KMSKS' region motif; sequence VLSKR. The residue at position 434 (S434) is a Phosphoserine. Residues K498, K535, K542, and K637 each carry the N6-acetyllysine modification. The segment covering 708–728 has biased composition (basic and acidic residues); that stretch reads KEMPTSGSKEKTKAEPLKKET. The tract at residues 708–741 is disordered; the sequence is KEMPTSGSKEKTKAEPLKKETSSAPKEGPVPAVS. A Phosphoserine modification is found at S746. The WHEP-TRS 1 domain occupies 748 to 804; the sequence is ESSVLYNRVAAQGDVVRELKAKKAAKEDVDAAVKQLLALKAEYKQKTGQEYKPGNPP. The interval 759-955 is 3 X 57 AA approximate repeats; the sequence is QGDVVRELKA…GIEYKPVSAT (197 aa). An N6-acetyllysine modification is found at K787. The segment at 794–823 is disordered; the sequence is TGQEYKPGNPPSAAAQSASTKSLPSAGEDR. The span at 807–816 shows a compositional bias: polar residues; it reads AAQSASTKSL. Residues 821 to 877 form the WHEP-TRS 2 domain; sequence EDRSLYDKIAAQGEVVRKLKAEKAPKAKVTEAVECLLSLKAEYKEKTGKEYVPGQPP. At K860 the chain carries N6-acetyllysine. 2 disordered regions span residues 868 to 903 and 952 to 1015; these read GKEYVPGQPPASQKSQPSPASKAEPAGPETTEAKAL and VSAT…RLGL. The residue at position 871 (Y871) is a Phosphotyrosine. Residues 877 to 890 are compositionally biased toward low complexity; sequence PASQKSQPSPASKA. The residue at position 885 (S885) is a Phosphoserine; by CDK5. Phosphothreonine is present on T897. The region spanning 899 to 955 is the WHEP-TRS 3 domain; the sequence is EAKALFDRVACQGEVVRKLKAEKASKDQVDPAVQELLQLKAQYKSLTGIEYKPVSAT. The span at 957 to 975 shows a compositional bias: basic and acidic residues; it reads SEDKDKKKKEKENKSEKQN. A compositionally biased stretch (gly residues) spans 992 to 1005; the sequence is QGGGLSSSGAGEGQ. S997 is subject to Phosphoserine. S998 bears the Phosphoserine; by RPS6KB1 mark. S999 carries the post-translational modification Phosphoserine. Residues 1006-1511 are proline--tRNA ligase; sequence GPKKQTRLGL…KFYTLFGRSY (506 aa). L-proline contacts are provided by residues 1120–1122 and R1151; that span reads TSE. The ATP site is built by R1151, E1153, R1162, T1163, Q1236, and T1239. R1151 is subject to Omega-N-methylarginine. Q1236 contributes to the Mg(2+) binding site. H1241 is an L-proline binding site. 2 residues coordinate ATP: T1275 and R1277. S1349 carries the post-translational modification Phosphoserine. Zn(2+)-binding residues include C1447, C1452, C1494, and C1496. N6-acetyllysine is present on K1502.

The protein in the N-terminal section; belongs to the class-I aminoacyl-tRNA synthetase family. Glutamate--tRNA ligase type 2 subfamily. It in the C-terminal section; belongs to the class-II aminoacyl-tRNA synthetase family. In terms of assembly, homodimer. Part of the aminoacyl-tRNA synthetase multienzyme complex, also know as multisynthetase complex, that is composed of the tRNA ligases for Arg (RARS1), Asp (DARS1), Gln (QARS1), Ile (IARS1), Leu (LARS1), Lys (KARS1), Met (MARS1) the bifunctional ligase for Glu and Pro (EPRS1) and the auxiliary subunits AIMP1/p43, AIMP2/p38 and EEF1E1/p18. Forms a linear complex that contains MARS1, EEF1E1, EPRS1 and AIMP2 that is at the core of the multisubunit complex. Interacts with TARS3. Interacts with DUS2L. Component of the GAIT complex which is composed of EPRS1, RPL13A and GAPDH. Interacts (phosphorylated at Ser-998) with SLC27A1; mediates the translocation of SLC27A1 from the cytoplasm to the plasma membrane thereby increasing the uptake of long-chain fatty acids. Phosphorylated at Ser-998 by RPS6KB1; triggers EPRS1 release from the aminoacyl-tRNA synthetase multienzyme complex. In monocytes, the IFN-gamma-induced phosphorylation at Ser-998 releases EPRS1 from the aminoacyl-tRNA synthetase multienzyme complex, allowing its association with the GAIT complex. Phosphorylation at Ser-998 is specifically required for the RPL13A-mediated interaction of the GAIT complex with eIF4G. Phosphorylation at Ser-998 by RPS6KB1, is also induced by insulin through activation of the mTORC1 signaling pathway and promotes the interaction of EPRS1 with SLC27A1.

It localises to the cytoplasm. Its subcellular location is the cytosol. The protein resides in the membrane. The enzyme catalyses tRNA(Glu) + L-glutamate + ATP = L-glutamyl-tRNA(Glu) + AMP + diphosphate. It carries out the reaction tRNA(Pro) + L-proline + ATP = L-prolyl-tRNA(Pro) + AMP + diphosphate. Functionally, multifunctional protein which primarily functions within the aminoacyl-tRNA synthetase multienzyme complex, also known as multisynthetase complex. Within the complex it catalyzes the attachment of both L-glutamate and L-proline to their cognate tRNAs in a two-step reaction where the amino acid is first activated by ATP to form a covalent intermediate with AMP. Subsequently, the activated amino acid is transferred to the acceptor end of the cognate tRNA to form L-glutamyl-tRNA(Glu) and L-prolyl-tRNA(Pro). Upon interferon-gamma stimulation, EPRS1 undergoes phosphorylation, causing its dissociation from the aminoacyl-tRNA synthetase multienzyme complex. It is recruited to form the GAIT complex, which binds to stem loop-containing GAIT elements found in the 3'-UTR of various inflammatory mRNAs, such as ceruloplasmin. The GAIT complex inhibits the translation of these mRNAs, allowing interferon-gamma to redirect the function of EPRS1 from protein synthesis to translation inhibition in specific cell contexts. Furthermore, it can function as a downstream effector in the mTORC1 signaling pathway, by promoting the translocation of SLC27A1 from the cytoplasm to the plasma membrane where it mediates the uptake of long-chain fatty acid by adipocytes. Thereby, EPRS1 also plays a role in fat metabolism and more indirectly influences lifespan. In Cricetulus griseus (Chinese hamster), this protein is Bifunctional glutamate/proline--tRNA ligase.